The chain runs to 208 residues: T-cell surface glycoprotein CD8 beta chain (208 aa).

The N-terminal stretch at 1–21 (MQPWLWLVFSVKLSALWGSSA) is a signal peptide. The Ig-like V-type domain occupies 22-131 (LLQTPSSLLV…MVVFGTGTKL (110 aa)). Residues 22-168 (LLQTPSSLLV…KTQKGLTCGL (147 aa)) are Extracellular-facing. 3 N-linked (GlcNAc...) asparagine glycosylation sites follow: asparagine 34, asparagine 88, and asparagine 94. Cysteine 41 and cysteine 115 are joined by a disulfide. Residues 169-189 (ITLSLLVACILVLLVSLSVAI) traverse the membrane as a helical segment. The Cytoplasmic segment spans residues 190–208 (HFHCMRRRARIHFMKQFHK).

As to quaternary structure, forms disulfide-linked heterodimers with CD8A at the cell surface. Interacts with CD3D; this interaction couples TCR-CD3 with CD8. Interacts with LCK. Phosphorylated as a consequence of T-cell activation. In terms of processing, palmitoylated at the cytoplasmic tail and thereby targets the heterodimer CD8A/CD8B to lipid rafts unlike CD8A homodimers.

The protein resides in the cell membrane. Integral membrane glycoprotein that plays an essential role in the immune response and serves multiple functions in responses against both external and internal offenses. In T-cells, functions primarily as a coreceptor for MHC class I molecule:peptide complex. The antigens presented by class I peptides are derived from cytosolic proteins while class II derived from extracellular proteins. Interacts simultaneously with the T-cell receptor (TCR) and the MHC class I proteins presented by antigen presenting cells (APCs). In turn, recruits the Src kinase LCK to the vicinity of the TCR-CD3 complex. A palmitoylation site in the cytoplasmic tail of CD8B chain contributes to partitioning of CD8 into the plasma membrane lipid rafts where signaling proteins are enriched. Once LCK recruited, it initiates different intracellular signaling pathways by phosphorylating various substrates ultimately leading to lymphokine production, motility, adhesion and activation of cytotoxic T-lymphocytes (CTLs). Additionally, plays a critical role in thymic selection of CD8+ T-cells. This chain is T-cell surface glycoprotein CD8 beta chain (Cd8b), found in Rattus norvegicus (Rat).